The chain runs to 202 residues: N-(5'-phosphoribosyl)anthranilate isomerase (202 aa).

The protein belongs to the TrpF family.

It catalyses the reaction N-(5-phospho-beta-D-ribosyl)anthranilate = 1-(2-carboxyphenylamino)-1-deoxy-D-ribulose 5-phosphate. The protein operates within amino-acid biosynthesis; L-tryptophan biosynthesis; L-tryptophan from chorismate: step 3/5. This is N-(5'-phosphoribosyl)anthranilate isomerase from Listeria monocytogenes serotype 4b (strain F2365).